The sequence spans 216 residues: Cytidylate kinase (216 aa).

Glycine 10 to threonine 18 contributes to the ATP binding site.

The protein belongs to the cytidylate kinase family. Type 1 subfamily.

Its subcellular location is the cytoplasm. The catalysed reaction is CMP + ATP = CDP + ADP. The enzyme catalyses dCMP + ATP = dCDP + ADP. This is Cytidylate kinase from Clostridioides difficile (strain 630) (Peptoclostridium difficile).